The following is a 46-amino-acid chain: U-myrmeciitoxin(01)-Mg6a (46 aa).

A signal peptide spans M1–T20. Residues V21 to T33 constitute a propeptide that is removed on maturation.

In terms of processing, contains 1 disulfide bond. In terms of tissue distribution, expressed by the venom gland.

The protein localises to the secreted. The polypeptide is U-myrmeciitoxin(01)-Mg6a (Myrmecia gulosa (Red bulldog ant)).